Consider the following 660-residue polypeptide: Phosphatidylinositol-3-phosphate phosphatase MTMR7 (660 aa).

In terms of domain architecture, Myotubularin phosphatase spans 126–504 (GWLLVDLSEE…FTYKFWNGMY (379 aa)). 3 residues coordinate a 1,2-diacyl-sn-glycero-3-phospho-(1D-myo-inositol-3-phosphate): Asn-250, Asn-275, and Ile-276. The active-site Phosphocysteine intermediate is Cys-338. A 1,2-diacyl-sn-glycero-3-phospho-(1D-myo-inositol-3-phosphate)-binding residues include Ser-339, Asp-340, Gly-341, Trp-342, Asp-343, Arg-344, and Arg-384. The stretch at 514 to 548 (RQSVTDYLMAVKEESQQLEEELESLEERLEKIQKV) forms a coiled coil. A disordered region spans residues 550-660 (LHGTKVKSKQ…DSDEAVFLTA (111 aa)). The segment covering 566 to 596 (SGFSTSDHSTANTPQDYSGNSKSFPSRSPSQ) has biased composition (polar residues). Position 578 is a phosphothreonine (Thr-578). Residues 641-653 (APSEDSGKDRDSD) show a composition bias toward basic and acidic residues.

It belongs to the protein-tyrosine phosphatase family. Non-receptor class myotubularin subfamily. In terms of assembly, heterodimer (via C-terminus) with MTMR9 (via coiled coil domain); the interaction enhances MTMR7 catalytic activity. Does not homodimerize. Interacts with RAB1B (in GDP-bound form). Highly expressed in brain (at protein level). Expressed at low levels in liver, kidney and testis.

It localises to the cytoplasm. Its subcellular location is the endomembrane system. It carries out the reaction a 1,2-diacyl-sn-glycero-3-phospho-(1D-myo-inositol-3-phosphate) + H2O = a 1,2-diacyl-sn-glycero-3-phospho-(1D-myo-inositol) + phosphate. The catalysed reaction is 1D-myo-inositol 1,3-bisphosphate + H2O = 1D-myo-inositol 1-phosphate + phosphate. Interaction with MTMR9 increases phosphatase activity. Lipid phosphatase that specifically dephosphorylates the D-3 position of phosphatidylinositol 3-phosphate (PtdIns(3)P) and inositol 1,3-bisphosphate (Ins(1,3)P2). The sequence is that of Phosphatidylinositol-3-phosphate phosphatase MTMR7 from Mus musculus (Mouse).